The following is a 4318-amino-acid chain: Cytoplasmic dynein 2 heavy chain 1 (4318 aa).

The stem stretch occupies residues 1–1658 (MPAEDARKEY…IMRMVDAEFQ (1658 aa)). 147–154 (LKSLVRKQ) provides a ligand contact to ATP. Coiled coils occupy residues 1328 to 1354 (DKATIWEQRLADLDEYLQNLNQIQRKW) and 1402 to 1431 (LRTTLTTLLDQLQRCQKALNEFLEEKRSIL). AAA stretches follow at residues 1659–1883 (YTYE…VLRG), 1951–2171 (DAIR…RQGD), 2261–2515 (ASDF…WVLG), and 2623–2871 (TFAR…SSSV). 1697–1704 (GPAGTGKT) provides a ligand contact to ATP. Residues 1959–1986 (EHNLVVMETQVKKALELYEQLRQRMGVV) are a coiled coil. ATP-binding positions include 1989–1996 (GPSGSGKS), 2301–2308 (GPDGCGKG), and 2661–2668 (GRSGVGRR). The interval 2888–3176 (DVYRRKKQGV…YELEKEQETI (289 aa)) is stalk. Coiled coils occupy residues 2908-2989 (VAKL…AEIE) and 3423-3480 (QHEK…KTKE). AAA stretches follow at residues 3251–3487 (LSTE…TITQ) and 3699–3914 (MTFF…IIDR).

Belongs to the dynein heavy chain family. The cytoplasmic dynein complex 2 is probably composed by a heavy chain DYH1B homodimer and a number of light intermediate chains.

The protein resides in the cytoplasm. It localises to the cytoskeleton. Its subcellular location is the cilium axoneme. It is found in the cell membrane. Its function is as follows. May function as a motor for intraflagellar retrograde transport. Functions in cilia biogenesis. The chain is Cytoplasmic dynein 2 heavy chain 1 (DYH1B) from Tripneustes gratilla (Hawaian sea urchin).